Consider the following 734-residue polypeptide: Paralemmin-3 (734 aa).

Residues Ser19 to Arg64 are a coiled coil. 2 disordered regions span residues Arg62–Glu100 and Gln114–Ser217. Residues Gly73–Ser82 are compositionally biased toward basic and acidic residues. Residues Gly90 to Ala116 adopt a coiled-coil conformation. Phosphoserine is present on residues Ser139, Ser158, Ser167, Ser170, and Ser172. The segment covering Arg186–Ala198 has biased composition (polar residues). Phosphoserine is present on Ser270. Residues Asp297–Ala308 are compositionally biased toward basic and acidic residues. 3 disordered regions span residues Asp297–Glu347, Pro374–Val400, and Glu413–Ala709. Thr311 bears the Phosphothreonine mark. Positions Arg315–Leu336 are enriched in basic and acidic residues. Residues Ser332 and Ser335 each carry the phosphoserine modification. Composition is skewed to basic and acidic residues over residues Glu413–Gly427, Thr435–Glu452, Asp462–Glu484, Leu494–Thr531, Ile540–Gly561, Glu571–Asp582, Glu589–Lys607, and Asp630–Gly647. Ser451 is subject to Phosphoserine. A Phosphoserine modification is found at Ser601. Ser721 is modified (phosphoserine). S-palmitoyl cysteine attachment occurs at residues Cys728 and Cys730. The residue at position 731 (Cys731) is a Cysteine methyl ester. Cys731 carries the S-farnesyl cysteine lipid modification. Positions Val732 to Met734 are cleaved as a propeptide — removed in mature form.

Belongs to the paralemmin family. As to quaternary structure, interacts with SIGIRR. Palmitoylated on Cys-728 and Cys-730 and prenylated on Cys-731; which is required for membrane association.

The protein resides in the cytoplasm. Its subcellular location is the cell membrane. Its function is as follows. ATP-binding protein, which may act as a adapter in the Toll-like receptor (TLR) signaling. The polypeptide is Paralemmin-3 (Palm3) (Mus musculus (Mouse)).